We begin with the raw amino-acid sequence, 297 residues long: Probable endonuclease 4 (297 aa).

9 residues coordinate Zn(2+): H69, H110, E145, D179, H182, H214, D227, H229, and E259.

This sequence belongs to the AP endonuclease 2 family. It depends on Zn(2+) as a cofactor.

The enzyme catalyses Endonucleolytic cleavage to 5'-phosphooligonucleotide end-products.. Endonuclease IV plays a role in DNA repair. It cleaves phosphodiester bonds at apurinic or apyrimidinic (AP) sites, generating a 3'-hydroxyl group and a 5'-terminal sugar phosphate. This Listeria monocytogenes serovar 1/2a (strain ATCC BAA-679 / EGD-e) protein is Probable endonuclease 4.